Reading from the N-terminus, the 297-residue chain is ClpXP adapter protein SpxH (297 aa).

It belongs to the SpxH family. Interacts with Spx.

The protein resides in the cytoplasm. Functionally, adapter protein required for efficient degradation of Spx by ClpXP under non-stress conditions. Interaction with Spx stabilizes Spx and exposes the C-terminus of Spx for recognition and proteolysis by ClpXP. This chain is ClpXP adapter protein SpxH, found in Bacillus thuringiensis subsp. konkukian (strain 97-27).